Here is a 455-residue protein sequence, read N- to C-terminus: Exodeoxyribonuclease 7 large subunit (455 aa).

Belongs to the XseA family. In terms of assembly, heterooligomer composed of large and small subunits.

The protein localises to the cytoplasm. The enzyme catalyses Exonucleolytic cleavage in either 5'- to 3'- or 3'- to 5'-direction to yield nucleoside 5'-phosphates.. Bidirectionally degrades single-stranded DNA into large acid-insoluble oligonucleotides, which are then degraded further into small acid-soluble oligonucleotides. This Oceanobacillus iheyensis (strain DSM 14371 / CIP 107618 / JCM 11309 / KCTC 3954 / HTE831) protein is Exodeoxyribonuclease 7 large subunit.